Consider the following 120-residue polypeptide: Large ribosomal subunit protein uL18 (120 aa).

The protein belongs to the universal ribosomal protein uL18 family. In terms of assembly, part of the 50S ribosomal subunit; part of the 5S rRNA/L5/L18/L25 subcomplex. Contacts the 5S and 23S rRNAs.

Its function is as follows. This is one of the proteins that bind and probably mediate the attachment of the 5S RNA into the large ribosomal subunit, where it forms part of the central protuberance. This Halalkalibacterium halodurans (strain ATCC BAA-125 / DSM 18197 / FERM 7344 / JCM 9153 / C-125) (Bacillus halodurans) protein is Large ribosomal subunit protein uL18.